The primary structure comprises 248 residues: Deoxyribose-phosphate aldolase (248 aa).

D106 (proton donor/acceptor) is an active-site residue. K168 serves as the catalytic Schiff-base intermediate with acetaldehyde. K197 (proton donor/acceptor) is an active-site residue.

It belongs to the DeoC/FbaB aldolase family. DeoC type 1 subfamily.

The protein localises to the cytoplasm. It carries out the reaction 2-deoxy-D-ribose 5-phosphate = D-glyceraldehyde 3-phosphate + acetaldehyde. The protein operates within carbohydrate degradation; 2-deoxy-D-ribose 1-phosphate degradation; D-glyceraldehyde 3-phosphate and acetaldehyde from 2-deoxy-alpha-D-ribose 1-phosphate: step 2/2. In terms of biological role, catalyzes a reversible aldol reaction between acetaldehyde and D-glyceraldehyde 3-phosphate to generate 2-deoxy-D-ribose 5-phosphate. The polypeptide is Deoxyribose-phosphate aldolase (Rhizobium meliloti (strain 1021) (Ensifer meliloti)).